The primary structure comprises 319 residues: Ferrochelatase (319 aa).

2 residues coordinate Fe cation: His192 and Glu271.

It belongs to the ferrochelatase family.

It is found in the cytoplasm. The catalysed reaction is heme b + 2 H(+) = protoporphyrin IX + Fe(2+). The protein operates within porphyrin-containing compound metabolism; protoheme biosynthesis; protoheme from protoporphyrin-IX: step 1/1. Functionally, catalyzes the ferrous insertion into protoporphyrin IX. The sequence is that of Ferrochelatase from Geotalea daltonii (strain DSM 22248 / JCM 15807 / FRC-32) (Geobacter daltonii).